The chain runs to 80 residues: ASPINSHFTPYANYMPGYEDDVIMAAGTFIQGASIELSADGPIRPPYVAYVQGGLTYSHVKIAICSAIDALIEKELLTIS.

The protein to B.cereus similar ORF in glnR 5'region.

This is an uncharacterized protein from Bacillus cereus.